The chain runs to 577 residues: Putative pseudouridine synthase B0024.11 (577 aa).

Asp-188 acts as the Nucleophile in catalysis. Residues 265-472 (GFINYFGTQR…GESSRCLFVE (208 aa)) enclose the TRUD domain. Residues 538 to 565 (KAMRDASFKTRGDDEKTEENVLEEKGSD) are compositionally biased toward basic and acidic residues. The interval 538-577 (KAMRDASFKTRGDDEKTEENVLEEKGSDDANELNLVSEDQ) is disordered.

This sequence belongs to the pseudouridine synthase TruD family.

The catalysed reaction is a uridine in tRNA = a pseudouridine in tRNA. In Caenorhabditis elegans, this protein is Putative pseudouridine synthase B0024.11.